Reading from the N-terminus, the 450-residue chain is Coiled-coil domain-containing protein 149-A (450 aa).

Coiled-coil stretches lie at residues 1 to 197 (MANQ…DRRK) and 259 to 286 (IQHQRQTNRILGNRVADLERKLKTLEIS). Positions 290-358 (SLPDDRTGRG…NGQVGTQLKE (69 aa)) are disordered. Positions 343-354 (PSGTRTNGQVGT) are enriched in polar residues.

Belongs to the CCDC149 family.

In Danio rerio (Zebrafish), this protein is Coiled-coil domain-containing protein 149-A (ccdc149a).